We begin with the raw amino-acid sequence, 417 residues long: Serine hydroxymethyltransferase (417 aa).

(6S)-5,6,7,8-tetrahydrofolate contacts are provided by residues Leu-121 and 125-127 (GHL). Lys-229 carries the post-translational modification N6-(pyridoxal phosphate)lysine. Residue 355–357 (SPF) coordinates (6S)-5,6,7,8-tetrahydrofolate.

Belongs to the SHMT family. Homodimer. The cofactor is pyridoxal 5'-phosphate.

The protein resides in the cytoplasm. It carries out the reaction (6R)-5,10-methylene-5,6,7,8-tetrahydrofolate + glycine + H2O = (6S)-5,6,7,8-tetrahydrofolate + L-serine. Its pathway is one-carbon metabolism; tetrahydrofolate interconversion. The protein operates within amino-acid biosynthesis; glycine biosynthesis; glycine from L-serine: step 1/1. Its function is as follows. Catalyzes the reversible interconversion of serine and glycine with tetrahydrofolate (THF) serving as the one-carbon carrier. This reaction serves as the major source of one-carbon groups required for the biosynthesis of purines, thymidylate, methionine, and other important biomolecules. Also exhibits THF-independent aldolase activity toward beta-hydroxyamino acids, producing glycine and aldehydes, via a retro-aldol mechanism. The polypeptide is Serine hydroxymethyltransferase (Xanthomonas campestris pv. campestris (strain 8004)).